The following is a 132-amino-acid chain: Fatty acid-binding protein 9 (132 aa).

Phosphoserine occurs at positions 13, 14, 44, and 91.

It belongs to the calycin superfamily. Fatty-acid binding protein (FABP) family.

The protein localises to the cytoplasm. This is Fatty acid-binding protein 9 (FABP9) from Homo sapiens (Human).